A 400-amino-acid polypeptide reads, in one-letter code: CCA-adding enzyme (400 aa).

Residues glycine 32 and arginine 35 each coordinate ATP. Glycine 32 and arginine 35 together coordinate CTP. Mg(2+) is bound by residues aspartate 45 and aspartate 47. 5 residues coordinate ATP: arginine 116, aspartate 159, arginine 162, arginine 165, and arginine 168. CTP-binding residues include arginine 116, aspartate 159, arginine 162, arginine 165, and arginine 168.

Belongs to the tRNA nucleotidyltransferase/poly(A) polymerase family. Bacterial CCA-adding enzyme type 3 subfamily. Homodimer. Requires Mg(2+) as cofactor.

The enzyme catalyses a tRNA precursor + 2 CTP + ATP = a tRNA with a 3' CCA end + 3 diphosphate. The catalysed reaction is a tRNA with a 3' CCA end + 2 CTP + ATP = a tRNA with a 3' CCACCA end + 3 diphosphate. In terms of biological role, catalyzes the addition and repair of the essential 3'-terminal CCA sequence in tRNAs without using a nucleic acid template. Adds these three nucleotides in the order of C, C, and A to the tRNA nucleotide-73, using CTP and ATP as substrates and producing inorganic pyrophosphate. tRNA 3'-terminal CCA addition is required both for tRNA processing and repair. Also involved in tRNA surveillance by mediating tandem CCA addition to generate a CCACCA at the 3' terminus of unstable tRNAs. While stable tRNAs receive only 3'-terminal CCA, unstable tRNAs are marked with CCACCA and rapidly degraded. In Limosilactobacillus fermentum (strain NBRC 3956 / LMG 18251) (Lactobacillus fermentum), this protein is CCA-adding enzyme.